The following is a 595-amino-acid chain: MGKKQHSKDRMFITKTEWATEWGGAKSKENRTPFKSLPYYCCALTFLPFEDPVCTIDGSVFEITTIVPYIRKFGKHPVTGAPLKGEDLIPLIFHKNSEGEYHCPVLNKVFTEFTHIVAVKTTGNVFCYEAIKELNIKTKNWKELLTEEPFTRADLITIQNPNAVDGKVTVEFDHVKNGLKIDDEELKKMNSDPAYNINVSGDIKHMLADLGTDKAKEIALHGGGGNKARNERAAAIAAILESRSKIKEVSKAEQPKQTYSVVDAASASVFGRSADAAKAGSSDKTAARIAMHMAGDRTPVNSKMVKSRYSSGAASRSFTSSAFTPVTKNDFELIKVEKNPKKKGYVQFQTTHGDLNIELHCDIAPRACENFITLCERGYYNGVAFHRSIRNFMIQGGDPTGTGKGGESIWGKPFKDEPNSKLLHSGRGVVSMANSGPHTNGSQFFVLYKSATHLNYKHTVFGGVVGGLATLAAMENVPVDESDRPLEEIKIIEASVFVNPYTELDEEEEKEKAEKEKNEDKDIEKIGSWYSNPGSGTTEAGAGGGGVGKYLKAMSSTATKDTKGSLDSDISTIGVSKKRKTTASASTGFKDFSSW.

One can recognise a U-box domain in the interval 35–108; it reads KSLPYYCCAL…GEYHCPVLNK (74 aa). In terms of domain architecture, PPIase cyclophilin-type spans 342–496; it reads KKGYVQFQTT…EEIKIIEASV (155 aa). 2 disordered regions span residues 503–546 and 576–595; these read ELDE…GGGG and SKKR…FSSW. Residues 510–525 show a composition bias toward basic and acidic residues; that stretch reads KEKAEKEKNEDKDIEK. Positions 582 to 595 are enriched in polar residues; sequence TASASTGFKDFSSW.

This sequence belongs to the cyclophilin-type PPIase family. PPIL2 subfamily. As to expression, expressed in leaves, flower buds and stems. Lower levels of expression in roots.

The protein localises to the nucleus. The catalysed reaction is [protein]-peptidylproline (omega=180) = [protein]-peptidylproline (omega=0). The enzyme catalyses S-ubiquitinyl-[E2 ubiquitin-conjugating enzyme]-L-cysteine + [acceptor protein]-L-lysine = [E2 ubiquitin-conjugating enzyme]-L-cysteine + N(6)-ubiquitinyl-[acceptor protein]-L-lysine.. It functions in the pathway protein modification; protein ubiquitination. Functionally, may catalyze the cis-trans isomerization of proline imidic peptide bonds in oligopeptides thereby assisting the folding of proteins. May also function as a chaperone, playing a role in intracellular transport of proteins. May also have a protein ubiquitin ligase activity acting as an E3 ubiquitin protein ligase or as a ubiquitin-ubiquitin ligase promoting elongation of ubiquitin chains on proteins. This chain is Peptidyl-prolyl cis-trans isomerase CYP65 (CYP65), found in Arabidopsis thaliana (Mouse-ear cress).